We begin with the raw amino-acid sequence, 934 residues long: Diacylglycerol kinase theta (934 aa).

The interval 1–50 is disordered; it reads MAAAAEPGARTWPGSGSPRLGSPAGSPVLGISGRTRPGSGPERTSRAIGS. Phosphoserine occurs at positions 22 and 26. 3 consecutive Phorbol-ester/DAG-type zinc fingers follow at residues 54-102, 115-162, and 177-228; these read GHSF…KTPC, AHCF…CSDC, and HHHW…APEC. Residues 387 to 486 enclose the Ras-associating domain; the sequence is TQEILKIYPG…TRFYVAETRA (100 aa). 2 short sequence motifs (LXXLL motif) span residues 547-551 and 566-570; these read LYMLA and LPDVL. Positions 576–713 constitute a DAGKc domain; the sequence is PDCCPLLVFV…MDRWTILLDA (138 aa). A compositionally biased stretch (basic residues) spans 905 to 916; that stretch reads LRKAKQKPRKAG. A disordered region spans residues 905–934; that stretch reads LRKAKQKPRKAGANRDTRVDTLPAPEGNPL.

It belongs to the eukaryotic diacylglycerol kinase family. As to quaternary structure, interacts with RHOA (constitutively activated, GTP-bound); the interaction inhibits DGKQ. Interacts with PRKCE. Interacts with PRKCH. Interacts with PLCB1. Interacts with NR5A1; the interaction requires both LXXLL motifs in DGKQ and is required for full phosphatidic acid-mediated activation of NR5A1. In terms of processing, phosphorylated by PRKCE and PRKCH in vitro. In terms of tissue distribution, widely expressed in all brain regions, including the cortex and hippocampus with a specific expression in neuronal cells (at protein level).

The protein resides in the cytoplasm. Its subcellular location is the cytosol. It is found in the cell membrane. The protein localises to the synapse. It localises to the cytoskeleton. The protein resides in the nucleus. Its subcellular location is the nucleus speckle. It is found in the nucleus matrix. The catalysed reaction is a 1,2-diacyl-sn-glycerol + ATP = a 1,2-diacyl-sn-glycero-3-phosphate + ADP + H(+). The enzyme catalyses a 1-O-alkyl-sn-glycerol + ATP = a 1-O-alkyl-sn-glycero-3-phosphate + ADP + H(+). It carries out the reaction 1-O-alkyl-2-acyl-sn-glycerol + ATP = 1-O-alkyl-2-acyl-sn-glycero-3-phosphate + ADP + H(+). It catalyses the reaction 1,2-di-(9Z-octadecenoyl)-sn-glycerol + ATP = 1,2-di-(9Z-octadecenoyl)-sn-glycero-3-phosphate + ADP + H(+). The catalysed reaction is 1-O-hexadecyl-sn-glycerol + ATP = 1-O-hexadecyl-sn-glycero-3-phosphate + ADP + H(+). The enzyme catalyses 1-O-hexadecyl-2-acetyl-sn-glycerol + ATP = 1-O-hexadecyl-2-acetyl-sn-glycero-3-phosphate + ADP + H(+). It carries out the reaction 1-octadecanoyl-2-(5Z,8Z,11Z,14Z-eicosatetraenoyl)-sn-glycerol + ATP = 1-octadecanoyl-2-(5Z,8Z,11Z,14Z-eicosatetraenoyl)-sn-glycero-3-phosphate + ADP + H(+). It functions in the pathway lipid metabolism; glycerolipid metabolism. Activated by phosphatidylserine. In terms of biological role, diacylglycerol kinase that converts diacylglycerol/DAG into phosphatidic acid/phosphatidate/PA and regulates the respective levels of these two bioactive lipids. Thereby, acts as a central switch between the signaling pathways activated by these second messengers with different cellular targets and opposite effects in numerous biological processes. Within the adrenocorticotropic hormone signaling pathway, produces phosphatidic acid which in turn activates NR5A1 and subsequent steroidogenic gene transcription. Also functions downstream of the nerve growth factor signaling pathway being specifically activated in the nucleus by the growth factor. Through its diacylglycerol activity also regulates synaptic vesicle endocytosis. The polypeptide is Diacylglycerol kinase theta (Dgkq) (Mus musculus (Mouse)).